Consider the following 175-residue polypeptide: dATP triphosphohydrolase (175 aa).

Residue arginine 19 coordinates dATP. Residues histidine 34, histidine 66, aspartate 67, glutamate 70, aspartate 75, and aspartate 119 each contribute to the Co(2+) site.

The protein belongs to the Caudovirales dATP triphosphohydrolase family. Homohexamer. Co(2+) is required as a cofactor. It depends on Zn(2+) as a cofactor.

The catalysed reaction is dATP + H2O = 2'-deoxyadenosine + triphosphate + H(+). The enzyme catalyses dADP + H2O = 2'-deoxyadenosine + diphosphate. It catalyses the reaction dAMP + H2O = 2'-deoxyadenosine + phosphate. Catalyzes the hydrolysis of dATP, dADP and dAMP into dA. This step is essential for Z-genome synthesis (containing aminoadenine instead of adenine). Specifically removes dATP and its precursor dADP from the nucleotide pool of the host, preventing the incorporation of A into the phage genome and favoring the integration of the Z-base into the viral genome. The sequence is that of dATP triphosphohydrolase (datZ) from Cyanophage S-2L (Cyanobacteria phage S-2L).